A 97-amino-acid polypeptide reads, in one-letter code: Large ribosomal subunit protein uL23 (97 aa).

This sequence belongs to the universal ribosomal protein uL23 family. As to quaternary structure, part of the 50S ribosomal subunit. Contacts protein L29, and trigger factor when it is bound to the ribosome.

Its function is as follows. One of the early assembly proteins it binds 23S rRNA. One of the proteins that surrounds the polypeptide exit tunnel on the outside of the ribosome. Forms the main docking site for trigger factor binding to the ribosome. The chain is Large ribosomal subunit protein uL23 from Rhizobium etli (strain CIAT 652).